The chain runs to 67 residues: uncharacterized protein (67 aa).

Residues 17–47 (AASLQELEKKINTQIENNKAIMLRVKSVSHQ) adopt a coiled-coil conformation.

This is an uncharacterized protein from Bacillus subtilis (strain 168).